Consider the following 253-residue polypeptide: Major prion protein (253 aa).

A signal peptide spans 1 to 22 (MANLGCWMLVLFVATWSDLGLC). The tract at residues 23-38 (KKRPKPGGWNTGGSRY) is interaction with ADGRG6. An interaction with GRB2, ERI3 and SYN1 region spans residues 23 to 230 (KKRPKPGGWN…ESQAYYQRGS (208 aa)). Positions 26–108 (PKPGGWNTGG…WNKPSKPKTN (83 aa)) are disordered. Tandem repeats lie at residues 51-59 (PQGGGGWGQ), 60-67 (PHGGGWGQ), 68-75 (PHGGGWGQ), 76-83 (PHGGGWGQ), and 84-91 (PHGGGWGQ). Residues 51–91 (PQGGGGWGQPHGGGWGQPHGGGWGQPHGGGWGQPHGGGWGQ) are 5 X 8 AA tandem repeats of P-H-G-G-G-W-G-Q. The segment covering 52–95 (QGGGGWGQPHGGGWGQPHGGGWGQPHGGGWGQPHGGGWGQGGGT) has biased composition (gly residues). Cu(2+)-binding residues include H61, G62, G63, H69, G70, G71, H77, G78, G79, H85, G86, and G87. Cysteines 179 and 214 form a disulfide. Residues N181 and N197 are each glycosylated (N-linked (GlcNAc...) asparagine). S230 is lipidated: GPI-anchor amidated serine. A propeptide spans 231-253 (SMVLFSSPPVILLISFLIFLIVG) (removed in mature form).

The protein belongs to the prion family. In terms of assembly, monomer and homodimer. Has a tendency to aggregate into amyloid fibrils containing a cross-beta spine, formed by a steric zipper of superposed beta-strands. Soluble oligomers may represent an intermediate stage on the path to fibril formation. Copper binding may promote oligomerization. Interacts with GRB2, APP, ERI3/PRNPIP and SYN1. Mislocalized cytosolically exposed PrP interacts with MGRN1; this interaction alters MGRN1 subcellular location and causes lysosomal enlargement. Interacts with KIAA1191. Interacts with ADGRG6. The glycosylation pattern (the amount of mono-, di- and non-glycosylated forms or glycoforms) seems to differ in normal and CJD prion.

Its subcellular location is the cell membrane. It localises to the golgi apparatus. Its primary physiological function is unclear. May play a role in neuronal development and synaptic plasticity. May be required for neuronal myelin sheath maintenance. May promote myelin homeostasis through acting as an agonist for ADGRG6 receptor. May play a role in iron uptake and iron homeostasis. Soluble oligomers are toxic to cultured neuroblastoma cells and induce apoptosis (in vitro). Association with GPC1 (via its heparan sulfate chains) targets PRNP to lipid rafts. Also provides Cu(2+) or Zn(2+) for the ascorbate-mediated GPC1 deaminase degradation of its heparan sulfate side chains. The sequence is that of Major prion protein (PRNP) from Homo sapiens (Human).